The sequence spans 258 residues: Acyl-[acyl-carrier-protein]--UDP-N-acetylglucosamine O-acyltransferase (258 aa).

It belongs to the transferase hexapeptide repeat family. LpxA subfamily. Homotrimer.

It is found in the cytoplasm. The catalysed reaction is a (3R)-hydroxyacyl-[ACP] + UDP-N-acetyl-alpha-D-glucosamine = a UDP-3-O-[(3R)-3-hydroxyacyl]-N-acetyl-alpha-D-glucosamine + holo-[ACP]. Its pathway is glycolipid biosynthesis; lipid IV(A) biosynthesis; lipid IV(A) from (3R)-3-hydroxytetradecanoyl-[acyl-carrier-protein] and UDP-N-acetyl-alpha-D-glucosamine: step 1/6. Its function is as follows. Involved in the biosynthesis of lipid A, a phosphorylated glycolipid that anchors the lipopolysaccharide to the outer membrane of the cell. The sequence is that of Acyl-[acyl-carrier-protein]--UDP-N-acetylglucosamine O-acyltransferase from Thermodesulfovibrio yellowstonii (strain ATCC 51303 / DSM 11347 / YP87).